Here is a 154-residue protein sequence, read N- to C-terminus: Cytochrome c-550 (154 aa).

The first 20 residues, 1–20 (MKISIYATLAALSLALPAVA), serve as a signal peptide directing secretion. Residue Gln-21 is modified to Pyrrolidone carboxylic acid. Cys-35, Cys-38, His-39, and Met-120 together coordinate heme c. Residues 150 to 154 (EGAAN) constitute a propeptide that is removed on maturation.

Post-translationally, binds 1 heme c group covalently per subunit.

This chain is Cytochrome c-550 (cyc), found in Paracoccus versutus (Thiobacillus versutus).